A 332-amino-acid polypeptide reads, in one-letter code: Ribosomal RNA small subunit methyltransferase H (332 aa).

Residues 36-38 (GGY), D54, F81, D102, and Q109 each bind S-adenosyl-L-methionine. Residues 284 to 332 (VTAGQEEVSANPRARSAKLRAAERTAAPATADDGESPGWPSLANVMRGG) are disordered.

This sequence belongs to the methyltransferase superfamily. RsmH family.

The protein localises to the cytoplasm. It carries out the reaction cytidine(1402) in 16S rRNA + S-adenosyl-L-methionine = N(4)-methylcytidine(1402) in 16S rRNA + S-adenosyl-L-homocysteine + H(+). Specifically methylates the N4 position of cytidine in position 1402 (C1402) of 16S rRNA. This chain is Ribosomal RNA small subunit methyltransferase H, found in Nitrobacter hamburgensis (strain DSM 10229 / NCIMB 13809 / X14).